The chain runs to 307 residues: Elongation factor Ts (307 aa).

Positions 80–83 are involved in Mg(2+) ion dislocation from EF-Tu; that stretch reads TDFV.

This sequence belongs to the EF-Ts family.

Its subcellular location is the cytoplasm. Associates with the EF-Tu.GDP complex and induces the exchange of GDP to GTP. It remains bound to the aminoacyl-tRNA.EF-Tu.GTP complex up to the GTP hydrolysis stage on the ribosome. This is Elongation factor Ts (tsf) from Zymomonas mobilis subsp. mobilis (strain ATCC 31821 / ZM4 / CP4).